The primary structure comprises 436 residues: 3-ketoacyl-CoA thiolase (436 aa).

Cys99 functions as the Acyl-thioester intermediate in the catalytic mechanism. Catalysis depends on proton acceptor residues His392 and Cys422.

The protein belongs to the thiolase-like superfamily. Thiolase family. Heterotetramer of two alpha chains (FadJ) and two beta chains (FadI).

It localises to the cytoplasm. It carries out the reaction an acyl-CoA + acetyl-CoA = a 3-oxoacyl-CoA + CoA. Its pathway is lipid metabolism; fatty acid beta-oxidation. In terms of biological role, catalyzes the final step of fatty acid oxidation in which acetyl-CoA is released and the CoA ester of a fatty acid two carbons shorter is formed. This Shewanella frigidimarina (strain NCIMB 400) protein is 3-ketoacyl-CoA thiolase.